The primary structure comprises 214 residues: Cytochrome b (214 aa).

The next 4 helical transmembrane spans lie at 31–51 (FGSM…FLAI), 75–96 (WIMQ…YIHI), 111–131 (WLSG…GYVL), and 176–196 (FFAL…IHII). Heme b is bound by residues His81 and His95. The heme b site is built by His180 and His194. His199 contributes to the a ubiquinone binding site.

Belongs to the cytochrome b family. The cytochrome bc1 complex contains 3 respiratory subunits (MT-CYB, CYC1 and UQCRFS1), 2 core proteins (UQCRC1 and UQCRC2) and probably 6 low-molecular weight proteins. It depends on heme b as a cofactor.

It localises to the mitochondrion inner membrane. Its function is as follows. Component of the ubiquinol-cytochrome c reductase complex (complex III or cytochrome b-c1 complex) that is part of the mitochondrial respiratory chain. The b-c1 complex mediates electron transfer from ubiquinol to cytochrome c. Contributes to the generation of a proton gradient across the mitochondrial membrane that is then used for ATP synthesis. The chain is Cytochrome b (MT-CYB) from Atractaspis micropholis (Mole viper).